The following is a 308-amino-acid chain: N-acetyl-gamma-glutamyl-phosphate reductase (308 aa).

The active site involves C116.

It belongs to the NAGSA dehydrogenase family. Type 2 subfamily.

The protein localises to the cytoplasm. The enzyme catalyses N-acetyl-L-glutamate 5-semialdehyde + phosphate + NADP(+) = N-acetyl-L-glutamyl 5-phosphate + NADPH + H(+). It functions in the pathway amino-acid biosynthesis; L-arginine biosynthesis; N(2)-acetyl-L-ornithine from L-glutamate: step 3/4. Its function is as follows. Catalyzes the NADPH-dependent reduction of N-acetyl-5-glutamyl phosphate to yield N-acetyl-L-glutamate 5-semialdehyde. The protein is N-acetyl-gamma-glutamyl-phosphate reductase of Mesorhizobium japonicum (strain LMG 29417 / CECT 9101 / MAFF 303099) (Mesorhizobium loti (strain MAFF 303099)).